A 126-amino-acid polypeptide reads, in one-letter code: MSLLRHRLQALPSLCLCVLVLACIGACQSEAYEGTTSPPPEQKMSRWNLVQSRLKELLEPAVTRTRDRWQWLGWSLSTLQGFMQTYYDDHLRDLGPRTKTWLLESKDGLLNKTYSLCPRLLCADKN.

The first 27 residues, 1–27 (MSLLRHRLQALPSLCLCVLVLACIGAC), serve as a signal peptide directing secretion.

It belongs to the apolipoprotein C4 family.

Its subcellular location is the secreted. Its function is as follows. May participate in lipoprotein metabolism. This Aotus nancymaae (Ma's night monkey) protein is Apolipoprotein C-IV (APOC4).